The chain runs to 104 residues: Sweet protein mabinlin-1 (104 aa).

4 disulfide bridges follow: Cys-4-Cys-53, Cys-17-Cys-42, Cys-43-Cys-91, and Cys-55-Cys-99.

This sequence belongs to the 2S seed storage albumins family. Heterodimer of a small A and a large B chain linked by disulfide bonds.

Functionally, 2S seed storage protein having sweetness-inducing activity. This form is not heat stable. The chain is Sweet protein mabinlin-1 from Capparis masaikai (Mabinlang).